A 292-amino-acid chain; its full sequence is Ribosomal protein L11 methyltransferase (292 aa).

Residues Thr144, Gly165, Asp187, and Asn229 each contribute to the S-adenosyl-L-methionine site.

Belongs to the methyltransferase superfamily. PrmA family.

The protein localises to the cytoplasm. The enzyme catalyses L-lysyl-[protein] + 3 S-adenosyl-L-methionine = N(6),N(6),N(6)-trimethyl-L-lysyl-[protein] + 3 S-adenosyl-L-homocysteine + 3 H(+). In terms of biological role, methylates ribosomal protein L11. The chain is Ribosomal protein L11 methyltransferase from Pseudomonas putida (strain GB-1).